We begin with the raw amino-acid sequence, 810 residues long: MPIPFKPVLAAAAIAQAFPAFAADPAPQSAQTLNEITVTGTHKTQKLGEEKIRRKTLDKLLVNDEHDLVRYDPGISVVEGGRAGSNGFTIRGVDKDRVAINVDGLAQAESRSSEAFQELFGAYGNFNANRNTSEPENFSEVTITKGADSLKSGSGALGGAVNYQTKSASDYVSEDKPYHLGIKGGSVGKNSQKFSSITAAGRLFGLDALLVYTRRFGKETKNRSTEGDIEIKNDGYVYNPTDTGGPSKYLTYVATGVARSQPDPQEWVNKSTLFKLGYNFNDQNRIGWIFEDSRTDRFTNELSNLWTGTTTSAATGDYRHRQDVSYRRRSGVEYKNELEHGPWDSLKLRYDKQRIDMNTWTWDIPKNYDKRGINGEVYHSFRHIRQNTAQWTADFEKQLDFSKAVWAAQYGLGGGKGDNANSDYSYFAKLYDPKILASNQAKITMLIENRSKYKFAYWNNAFHLGGNDRFRLNAGIRYDKNSSSAKDDPKYTTAIRGQIPHLGSERAHAGFSYGTGFDWRFTKHLHLLAKYSTGFRAPTSDETWLLFPHPDFYLKANPNLKAEKAKNWELGLAGSGKAGNFKLSGFKTKYRDFIELTYMGVSSDDKNNPRYAPLSDGTALVSSPVWQNQNRSAAWVKGIEFNGTWNLDSIGLPKGLHTGLNVSYIKGKATQNNGKETPINALSPWTAVYSLGYDAPSKRWGINAYATRTAAKKPSDTVHSNDDLNNPWPYAKHSKAYTLFDLSAYLNIGKQVTLRAAAYNITNKQYYTWESLRSIREFGTVNRVDNKTHAGIQRFTSPGRSYNFTIEAKF.

An N-terminal signal peptide occupies residues 1–22 (MPIPFKPVLAAAAIAQAFPAFA). The TBDR plug domain maps to 34–166 (NEITVTGTHK…LGGAVNYQTK (133 aa)). The region spanning 175–810 (DKPYHLGIKG…SYNFTIEAKF (636 aa)) is the TBDR beta-barrel domain. The TonB C-terminal box motif lies at 793 to 810 (QRFTSPGRSYNFTIEAKF).

Belongs to the TonB-dependent receptor family.

The protein localises to the cell outer membrane. Functionally, acts as a receptor for hemoglobin or the hemoglobin/haptoglobin complex and is required for heme uptake. The chain is Hemoglobin-haptoglobin utilization protein B (hpuB) from Neisseria meningitidis serogroup A / serotype 4A (strain DSM 15465 / Z2491).